Reading from the N-terminus, the 548-residue chain is Chaperonin GroEL (548 aa).

ATP contacts are provided by residues threonine 29 to proline 32, lysine 50, aspartate 86 to threonine 90, glycine 413, asparagine 479 to alanine 481, and aspartate 496.

This sequence belongs to the chaperonin (HSP60) family. In terms of assembly, forms a cylinder of 14 subunits composed of two heptameric rings stacked back-to-back. Interacts with the co-chaperonin GroES.

It is found in the cytoplasm. It carries out the reaction ATP + H2O + a folded polypeptide = ADP + phosphate + an unfolded polypeptide.. Together with its co-chaperonin GroES, plays an essential role in assisting protein folding. The GroEL-GroES system forms a nano-cage that allows encapsulation of the non-native substrate proteins and provides a physical environment optimized to promote and accelerate protein folding. The chain is Chaperonin GroEL from Deinococcus radiodurans (strain ATCC 13939 / DSM 20539 / JCM 16871 / CCUG 27074 / LMG 4051 / NBRC 15346 / NCIMB 9279 / VKM B-1422 / R1).